The following is a 411-amino-acid chain: Bifunctional protein GlmU (411 aa).

The pyrophosphorylase stretch occupies residues 1 to 204 (MDAIILCAGK…IGKLHGVELN (204 aa)). UTP-binding positions include 6-9 (LCAG), glutamine 74, and glycine 79. N-acetyl-alpha-D-glucosamine 1-phosphate-binding residues include threonine 80, glycine 130, asparagine 142, and asparagine 158. Residues 205–224 (GYWNDIGHPWDVLSANSHFL) are linker. Residues 225 to 411 (NKIISKISGK…DELVITKKRN (187 aa)) are N-acetyltransferase. The Proton acceptor role is filled by histidine 308. Acetyl-CoA is bound by residues alanine 384 and lysine 401.

This sequence in the N-terminal section; belongs to the N-acetylglucosamine-1-phosphate uridyltransferase family. The protein in the C-terminal section; belongs to the transferase hexapeptide repeat family.

It carries out the reaction N-acetyl-alpha-D-glucosamine 1-phosphate + UTP + H(+) = UDP-N-acetyl-alpha-D-glucosamine + diphosphate. The catalysed reaction is alpha-D-glucosamine 1-phosphate + acetyl-CoA = N-acetyl-alpha-D-glucosamine 1-phosphate + CoA + H(+). It participates in nucleotide-sugar biosynthesis; UDP-N-acetyl-alpha-D-glucosamine biosynthesis; N-acetyl-alpha-D-glucosamine 1-phosphate from alpha-D-glucosamine 6-phosphate (route II): step 2/2. Its pathway is nucleotide-sugar biosynthesis; UDP-N-acetyl-alpha-D-glucosamine biosynthesis; UDP-N-acetyl-alpha-D-glucosamine from N-acetyl-alpha-D-glucosamine 1-phosphate: step 1/1. In terms of biological role, catalyzes the last two sequential reactions in the de novo biosynthetic pathway for UDP-N-acetyl-glucosamine (UDP-GlcNAc). Responsible for the acetylation of GlcN-1-P to GlcNAc-1-P, and for the uridyl transfer from UTP to GlcNAc-1-P, to produce UDP-GlcNAc and pyrophosphate. This is Bifunctional protein GlmU from Methanococcus maripaludis (strain C5 / ATCC BAA-1333).